A 431-amino-acid chain; its full sequence is uncharacterized protein (431 aa).

Disordered stretches follow at residues 31-55, 257-291, and 365-431; these read VPAS…QAGV, QNGG…PKQD, and FQSP…HRKA. A compositionally biased stretch (polar residues) spans 42–55; it reads VSASQPNGAHQAGV. Basic and acidic residues predominate over residues 412 to 425; the sequence is VEYRRGRSLRESRE.

This is an uncharacterized protein from Arabidopsis thaliana (Mouse-ear cress).